We begin with the raw amino-acid sequence, 606 residues long: MKSLNVILTLLSLIISVLSKKVYYEAEDGKLNGITVFKELSGFSGKGYVGRFENPGNSVTVTVDAPATGMYDLSIIYCANMGQKINSLTVNDQSVGDITFTENTKFETKDVGAVYLNKGKNTIGLVSSWGWMWVDAFVINDAPNAAKDVSSKLNPTLVNPKAIPAAKKLYDFLKTNYGKRILSGQVGAAGQAGDEGQEIQRIQKATGKLPAVWNMDFIFESNDCTWRPQNPDITEMAINWWKKYEGKGIMAAQWHWNIAGKTGDFAFYSKDTTFNLENAVTEGTWEYEKIIKDIDRVSGHIKKLQAVNMPLIWRPLHENNGDWFWWGNNPKACAKLWKILYERMVNYHGLNNLIWLWNGNNDANTPVDYIDIIGVDIYANDHGPQTTAYNTHFDFYGGKKMVVLSENGRIPDIQQCVDQDVWWGYFQTWNSEFILQDSYHTDAQLKEYFNHKTVMNMDELPSFNVDSYNGDSGSSHNGNSESNSNTGNSDECWSINLGYPCCIGDYVVTTDENGDWGVENNEWCGIVHKSCWSEPLGYPCCVGNTVISADESGDWGVENNEWCGIVHKSCWAEFLGYPCCVGNTVISTDEFGDWGVENDDWCGILN.

Residues 1–19 (MKSLNVILTLLSLIISVLS) form the signal peptide. Residues 22–140 (VYYEAEDGKL…WMWVDAFVIN (119 aa)) enclose the CBM6 domain. Residues 164 to 458 (PAAKKLYDFL…FNHKTVMNMD (295 aa)) form the GH26 domain. Substrate is bound at residue W285. E318 (proton donor) is an active-site residue. Substrate contacts are provided by W323 and Y378. The active-site Nucleophile is E406. The interval 472–489 (SGSSHNGNSESNSNTGNS) is linker. CBM10 domains are found at residues 491–527 (ECWS…CGIV), 530–566 (SCWS…CGIV), and 569–605 (SCWA…CGIL). W493 provides a ligand contact to substrate.

Belongs to the glycosyl hydrolase 26 family.

It carries out the reaction Random hydrolysis of (1-&gt;4)-beta-D-mannosidic linkages in mannans, galactomannans and glucomannans.. Hydrolyzes 1,4-beta linked polysaccharide backbones of mannans, one of the major hemicellulose components in hardwoods and softwoods. Shows very high activity against mannohexaose but not against mannopentaose and smaller mannooligosaccharides. The major products released from mannooligosaccharide hydrolysis are mannose and mannobiose. The reiterated 40 AA domain is involved in binding the cellulase-hemicellulase complex. In Piromyces sp, this protein is Mannan endo-1,4-beta-mannosidase A (MANA).